Consider the following 330-residue polypeptide: MTPNSTGEVPSPIPKGALGLSLALASLIITANLLLALGIAWDRRLRSPPAGCFFLSLLLAGLLTGLALPTLPGLWNQSRRGYWSCLLVYLAPNFSFLSLLANLLLVHGERYMAVLRPLQPPGSIRLALLLTWAGPLLFASLPALGWNHWTPGANCSSQAIFPAPYLYLEVYGLLLPAVGAAAFLSVRVLATAHRQLQDICRLERAVCRDEPSALARALTWRQARAQAGAMLLFGLCWGPYVATLLLSVLAYEQRPPLGPGTLLSLLSLGSASAAAVPVAMGLGDQRYTAPWRAAAQRCLQGLWGRASRDSPGPSIAYHPSSQSSVDLDLN.

The Extracellular segment spans residues 1–19; sequence MTPNSTGEVPSPIPKGALG. N4 carries N-linked (GlcNAc...) asparagine glycosylation. Residues 20 to 40 traverse the membrane as a helical segment; the sequence is LSLALASLIITANLLLALGIA. The Cytoplasmic segment spans residues 41-50; it reads WDRRLRSPPA. The helical transmembrane segment at 51-71 threads the bilayer; the sequence is GCFFLSLLLAGLLTGLALPTL. The Extracellular portion of the chain corresponds to 72-85; that stretch reads PGLWNQSRRGYWSC. N-linked (GlcNAc...) asparagine glycosylation is present at N76. C85 and C155 form a disulfide bridge. The chain crosses the membrane as a helical span at residues 86–106; sequence LLVYLAPNFSFLSLLANLLLV. Topologically, residues 107 to 125 are cytoplasmic; sequence HGERYMAVLRPLQPPGSIR. The helical transmembrane segment at 126–146 threads the bilayer; that stretch reads LALLLTWAGPLLFASLPALGW. Residues 147 to 165 are Extracellular-facing; sequence NHWTPGANCSSQAIFPAPY. The helical transmembrane segment at 166 to 186 threads the bilayer; it reads LYLEVYGLLLPAVGAAAFLSV. The Cytoplasmic segment spans residues 187 to 228; that stretch reads RVLATAHRQLQDICRLERAVCRDEPSALARALTWRQARAQAG. A helical membrane pass occupies residues 229-249; sequence AMLLFGLCWGPYVATLLLSVL. At 250-261 the chain is on the extracellular side; the sequence is AYEQRPPLGPGT. Residues 262 to 282 traverse the membrane as a helical segment; the sequence is LLSLLSLGSASAAAVPVAMGL. The Cytoplasmic portion of the chain corresponds to 283-330; the sequence is GDQRYTAPWRAAAQRCLQGLWGRASRDSPGPSIAYHPSSQSSVDLDLN. The disordered stretch occupies residues 309–330; that stretch reads DSPGPSIAYHPSSQSSVDLDLN. Over residues 319–330 the composition is skewed to polar residues; it reads PSSQSSVDLDLN.

The protein belongs to the G-protein coupled receptor 1 family. As to expression, ubiquitously expressed. Expressed at higher level in spleen and placenta. Expressed at lower level in other tissues. In digestive tissues, it is expressed in stomach, duodenum, ileocecum, ileum, jejunum, ascending colon, transverse colon, descending colon, cecum and liver, but not in esophagus and rectum.

The protein resides in the cell membrane. Functionally, receptor for bile acid. Bile acid-binding induces its internalization, activation of extracellular signal-regulated kinase and intracellular cAMP production. May be involved in the suppression of macrophage functions by bile acids. This Homo sapiens (Human) protein is G-protein coupled bile acid receptor 1 (GPBAR1).